The primary structure comprises 435 residues: Dual specificity protein kinase FUZ7 (435 aa).

Residues 1-61 (MLSSGAGSSI…TIGKSSAVTP (61 aa)) form a disordered region. Over residues 46 to 59 (AASNASTIGKSSAV) the composition is skewed to polar residues. Positions 109–417 (LKTLSELGAG…PKDLTKHQYV (309 aa)) constitute a Protein kinase domain. Residues 115–123 (LGAGNGGTV) and Lys-138 contribute to the ATP site. Asp-231 (proton acceptor) is an active-site residue. Positions 307–359 (NEEDDDSDADNNYTNEDLAGTLSPTKPAPMISLGQNEKQRRRKSKPAGVSLEG) are disordered.

This sequence belongs to the protein kinase superfamily. STE Ser/Thr protein kinase family. MAP kinase kinase subfamily.

It catalyses the reaction L-seryl-[protein] + ATP = O-phospho-L-seryl-[protein] + ADP + H(+). The enzyme catalyses L-threonyl-[protein] + ATP = O-phospho-L-threonyl-[protein] + ADP + H(+). It carries out the reaction L-tyrosyl-[protein] + ATP = O-phospho-L-tyrosyl-[protein] + ADP + H(+). Functionally, protein kinase that is necessary for a-locus-dependent processes, such as conjugation tube formation, filament formation, and maintenance of filamentous growth, and for a-locus-independent processes, such as tumor induction and teliospore germination. The polypeptide is Dual specificity protein kinase FUZ7 (FUZ7) (Mycosarcoma maydis (Corn smut fungus)).